A 475-amino-acid polypeptide reads, in one-letter code: UDP-N-acetylmuramoylalanine--D-glutamate ligase (475 aa).

130-136 (GTNGKTT) provides a ligand contact to ATP.

It belongs to the MurCDEF family.

The protein localises to the cytoplasm. It catalyses the reaction UDP-N-acetyl-alpha-D-muramoyl-L-alanine + D-glutamate + ATP = UDP-N-acetyl-alpha-D-muramoyl-L-alanyl-D-glutamate + ADP + phosphate + H(+). Its pathway is cell wall biogenesis; peptidoglycan biosynthesis. Its function is as follows. Cell wall formation. Catalyzes the addition of glutamate to the nucleotide precursor UDP-N-acetylmuramoyl-L-alanine (UMA). In Corynebacterium efficiens (strain DSM 44549 / YS-314 / AJ 12310 / JCM 11189 / NBRC 100395), this protein is UDP-N-acetylmuramoylalanine--D-glutamate ligase.